A 127-amino-acid polypeptide reads, in one-letter code: Small ribosomal subunit protein uS13 (127 aa).

The span at Leu-96–Val-118 shows a compositional bias: basic residues. The disordered stretch occupies residues Leu-96–Arg-127.

It belongs to the universal ribosomal protein uS13 family. As to quaternary structure, part of the 30S ribosomal subunit. Forms a loose heterodimer with protein S19. Forms two bridges to the 50S subunit in the 70S ribosome.

In terms of biological role, located at the top of the head of the 30S subunit, it contacts several helices of the 16S rRNA. In the 70S ribosome it contacts the 23S rRNA (bridge B1a) and protein L5 of the 50S subunit (bridge B1b), connecting the 2 subunits; these bridges are implicated in subunit movement. Contacts the tRNAs in the A and P-sites. In Myxococcus xanthus (strain DK1622), this protein is Small ribosomal subunit protein uS13.